The following is a 227-amino-acid chain: Cytochrome c oxidase subunit 2 (227 aa).

Topologically, residues 1-14 are mitochondrial intermembrane; the sequence is MAYPFQLGLQDATS. Residues 15-45 form a helical membrane-spanning segment; the sequence is PIMEELTNFHDHTLMIVFLISSLVLYIISLM. Topologically, residues 46–59 are mitochondrial matrix; it reads LTTKLTHTNTMDAQ. Residues 60–87 form a helical membrane-spanning segment; the sequence is EVETIWTILPAVILILIALPSLRILYMM. The Mitochondrial intermembrane portion of the chain corresponds to 88-227; sequence DEINNPALTV…HFENWSASMI (140 aa). Cu cation-binding residues include histidine 161, cysteine 196, glutamate 198, cysteine 200, histidine 204, and methionine 207. Glutamate 198 provides a ligand contact to Mg(2+).

The protein belongs to the cytochrome c oxidase subunit 2 family. As to quaternary structure, component of the cytochrome c oxidase (complex IV, CIV), a multisubunit enzyme composed of 14 subunits. The complex is composed of a catalytic core of 3 subunits MT-CO1, MT-CO2 and MT-CO3, encoded in the mitochondrial DNA, and 11 supernumerary subunits COX4I, COX5A, COX5B, COX6A, COX6B, COX6C, COX7A, COX7B, COX7C, COX8 and NDUFA4, which are encoded in the nuclear genome. The complex exists as a monomer or a dimer and forms supercomplexes (SCs) in the inner mitochondrial membrane with NADH-ubiquinone oxidoreductase (complex I, CI) and ubiquinol-cytochrome c oxidoreductase (cytochrome b-c1 complex, complex III, CIII), resulting in different assemblies (supercomplex SCI(1)III(2)IV(1) and megacomplex MCI(2)III(2)IV(2)). Found in a complex with TMEM177, COA6, COX18, COX20, SCO1 and SCO2. Interacts with TMEM177 in a COX20-dependent manner. Interacts with COX20. Interacts with COX16. Requires Cu cation as cofactor.

It localises to the mitochondrion inner membrane. The catalysed reaction is 4 Fe(II)-[cytochrome c] + O2 + 8 H(+)(in) = 4 Fe(III)-[cytochrome c] + 2 H2O + 4 H(+)(out). Functionally, component of the cytochrome c oxidase, the last enzyme in the mitochondrial electron transport chain which drives oxidative phosphorylation. The respiratory chain contains 3 multisubunit complexes succinate dehydrogenase (complex II, CII), ubiquinol-cytochrome c oxidoreductase (cytochrome b-c1 complex, complex III, CIII) and cytochrome c oxidase (complex IV, CIV), that cooperate to transfer electrons derived from NADH and succinate to molecular oxygen, creating an electrochemical gradient over the inner membrane that drives transmembrane transport and the ATP synthase. Cytochrome c oxidase is the component of the respiratory chain that catalyzes the reduction of oxygen to water. Electrons originating from reduced cytochrome c in the intermembrane space (IMS) are transferred via the dinuclear copper A center (CU(A)) of subunit 2 and heme A of subunit 1 to the active site in subunit 1, a binuclear center (BNC) formed by heme A3 and copper B (CU(B)). The BNC reduces molecular oxygen to 2 water molecules using 4 electrons from cytochrome c in the IMS and 4 protons from the mitochondrial matrix. This chain is Cytochrome c oxidase subunit 2 (MT-CO2), found in Sundamys muelleri (Mueller's giant sunda rat).